The chain runs to 198 residues: TM2 domain-containing protein 2 (198 aa).

The N-terminal stretch at 1–27 (MRWPVPPLGYLLLGGQGLLLTFSLISS) is a signal peptide. Residues 28 to 128 (QNNTSPVTYP…FLRGNRPCIK (101 aa)) are Extracellular-facing. 3 N-linked (GlcNAc...) asparagine glycosylation sites follow: asparagine 29, asparagine 40, and asparagine 76. The helical transmembrane segment at 129-149 (YTGHYFITTLLYSFFLGCFGV) threads the bilayer. In terms of domain architecture, TM2 spans 131–179 (GHYFITTLLYSFFLGCFGVDRFCLGHTGTAVGKLLTWGGLGIWWFVDLI). The Cytoplasmic segment spans residues 150-166 (DRFCLGHTGTAVGKLLT). Residues 167–187 (WGGLGIWWFVDLILLITGGLM) form a helical membrane-spanning segment. The Extracellular portion of the chain corresponds to 188–198 (PSDNSNWCTIY).

This sequence belongs to the TM2 family.

The protein localises to the membrane. The protein is TM2 domain-containing protein 2 (tm2d2) of Xenopus laevis (African clawed frog).